The following is a 562-amino-acid chain: MNQAVAESINKSLKSSTADYTPKGYHITELESDSIYLDEHFSGNAKIFHNPAVAVLYEQALAFEHGSAITSTGALVTRSGVKTGRSPKDKRIVKEPSSQDDIWWGPVNIAMDDLSFMINRERAIDYLNTQEKIYVIDGYAGWDPKYRIKVRVICARAYHALFMHNMLIRPANREELRNFGEPDYTIYNAGQFPANRYTKGMSSSSSIAIDFARKEMVILGTQYAGEMKKGILTIMMYLMPKMGVLPLHSSCNQARNNGDTTLFFGLSGTGKTTLSADINRELIGDDEHVWTDTGCFNIEGGCYAKCIDLSREKEPEIFDAIKFGAVLENVVYNEYSRKVDYNDVSITENTRCAYPLEHIPNAKFPAIAGHPKNIIMLTCDAFGILPPVSRLDANQVMYHFIQGYTAKVAGTEVGVTEPTATFSSCYGEPFIVWHPTKYAEMLASQLHKHSARAWLINTGWTGGSHGVGSRIKLAYTRAIIDAIHSGELEKIPTTKMDVFGFQVPNSCPGVPSEILMPINGWADKEKYVSTMHKLAKLFIENFKKFQDKASPELVAAGPILPQ.

Residue 265 to 272 coordinates ATP; it reads GLSGTGKT.

The protein belongs to the phosphoenolpyruvate carboxykinase (ATP) family.

It carries out the reaction oxaloacetate + ATP = phosphoenolpyruvate + ADP + CO2. The protein operates within carbohydrate biosynthesis; gluconeogenesis. The protein is Phosphoenolpyruvate carboxykinase (ATP) (pckA) of Dictyostelium discoideum (Social amoeba).